A 295-amino-acid polypeptide reads, in one-letter code: UDP-N-acetylenolpyruvoylglucosamine reductase (295 aa).

Residues 23-188 form the FAD-binding PCMH-type domain; it reads QVGGPADFLA…ISAKFALKPG (166 aa). Residue Arg-167 is part of the active site. Ser-217 acts as the Proton donor in catalysis. The active site involves Glu-287.

The protein belongs to the MurB family. FAD serves as cofactor.

It is found in the cytoplasm. It catalyses the reaction UDP-N-acetyl-alpha-D-muramate + NADP(+) = UDP-N-acetyl-3-O-(1-carboxyvinyl)-alpha-D-glucosamine + NADPH + H(+). It functions in the pathway cell wall biogenesis; peptidoglycan biosynthesis. Its function is as follows. Cell wall formation. The sequence is that of UDP-N-acetylenolpyruvoylglucosamine reductase from Streptococcus equi subsp. zooepidemicus (strain H70).